The sequence spans 32 residues: Delta-actitoxin-Eqd1a (32 aa).

The protein belongs to the sea anemone short toxin (type III) family. In terms of processing, contains 4 disulfide bonds.

The protein localises to the secreted. It is found in the nematocyst. Binds specifically to sodium channels (Nav) of the axonal membrane of crayfish and prolongs the falling phase of the action potential. It also increases the maximum rates of rise of both action potential and resting potential. Is only active on crustaceans. This is Delta-actitoxin-Eqd1a from Entacmaea quadricolor (Bubble-tip anemone).